The chain runs to 366 residues: G-protein coupled receptor 183-B (366 aa).

Over 1–24 (MMSPDLDLNFSSNCNLYDHRPVAR) the chain is Extracellular. Asn9 carries N-linked (GlcNAc...) asparagine glycosylation. A helical membrane pass occupies residues 25 to 50 (VLIPLVYSIICPVGLLGNALALHVVI). Residues 51 to 70 (SSTTKINSITLYSANLAVSD) are Cytoplasmic-facing. The helical transmembrane segment at 71–88 (ILFCLSLPLRAVYYGLGF) threads the bilayer. Residues 89–98 (HWPMGEVLCK) lie on the Extracellular side of the membrane. A disulfide bridge links Cys97 with Cys175. The helical transmembrane segment at 99–120 (AIALLFYLNCYAGVNFMTCLAV) threads the bilayer. Over 121-142 (DRFVALVFPARLAKLRKAKNVR) the chain is Cytoplasmic. The chain crosses the membrane as a helical span at residues 143–161 (FVCLAIWLLVLAQTLPLLT). The Extracellular segment spans residues 162 to 187 (IGLTKTEPDSSITCMEYPNFEGVFKG). A helical transmembrane segment spans residues 188 to 210 (LPYMLIVAVVLGFGIPVMTIIAC). Topologically, residues 211 to 236 (YSILTHKLHQAAKSNQLTERSGKTKK) are cytoplasmic. Residues 237 to 260 (ARGVIAGVVFVFVVCFSPYHIDIL) form a helical membrane-spanning segment. The Extracellular segment spans residues 261–280 (QYMIRKLLYETDCKELQSFQ). The chain crosses the membrane as a helical span at residues 281–305 (ISLHITVCLMNLNSCLDPFVYFFAC). Topologically, residues 306–366 (KGYKQKVMRM…QQICYQPSAT (61 aa)) are cytoplasmic.

Belongs to the G-protein coupled receptor 1 family.

It is found in the cell membrane. In terms of biological role, probable receptor for oxysterols that plays a central role during humoral immunity. Promotes activated B-cell localization in the outer follicle and interfollicular regions. The chain is G-protein coupled receptor 183-B (gpr183b) from Danio rerio (Zebrafish).